Consider the following 640-residue polypeptide: Guanylate-binding protein 4 (640 aa).

The segment at 1–325 (MGERTLHAAV…DAINSGAVPC (325 aa)) is GTPase domain (Globular). The GB1/RHD3-type G domain maps to 50–292 (SQPVVVVAIV…FCSYIFTHAK (243 aa)). Residues 60–67 (GLYRTGKS), 82–84 (LGS), and 112–116 (DTEGL) each bind GTP. The stretch at 499 to 612 (GEKAIAAERA…EQLRLLKILD (114 aa)) forms a coiled coil.

The protein belongs to the TRAFAC class dynamin-like GTPase superfamily. GB1/RHD3 GTPase family. GB1 subfamily. Heterodimer with other family members, including GBP1, GBP2 and GBP5. Dimerization regulates subcellular location. Interacts with IRF7; preventing interaction between TRAF6 and IRF7, resulting in impaired TRAF6-mediated IRF7 ubiquitination. Post-translationally, (Microbial infection) Ubiquitinated by S.flexneri IpaH9.8, leading to its degradation by the proteasome, thereby preventing its ability to promote host defense against bacterial infection.

It localises to the golgi apparatus membrane. The protein resides in the cytoplasm. The protein localises to the nucleus. It is found in the perinuclear region. The enzyme catalyses GTP + H2O = GDP + phosphate + H(+). Functionally, interferon (IFN)-inducible GTPase that plays important roles in innate immunity against a diverse range of bacterial, viral and protozoan pathogens. Negatively regulates the antiviral response by inhibiting activation of IRF7 transcription factor. This chain is Guanylate-binding protein 4, found in Homo sapiens (Human).